A 188-amino-acid polypeptide reads, in one-letter code: MNPNMNMMPMSGPQMMQVMQSSPSGPPGPVQHQQQQPPQPLQQQQQAEKLDNISRVKSLLGPLRESMFLTIRSSAFALQQNNLADNLKRDTGAHHVPRFDKHLEDFYACCDQIEIHLKTAMQCLQQQNSSNHYLPGPVTPMRMETFMPDNAGPISYPTYLNTVRVHIQSAKDIHDTLISAAQNISQAD.

2 stretches are compositionally biased toward low complexity: residues 1-23 and 30-43; these read MNPN…QSSP and VQHQ…PLQQ. The disordered stretch occupies residues 1-43; that stretch reads MNPNMNMMPMSGPQMMQVMQSSPSGPPGPVQHQQQQPPQPLQQ.

This sequence belongs to the Mediator complex subunit 29 family. Component of the Mediator complex. Self-associates. Interacts with dsx.

Its subcellular location is the nucleus. In terms of biological role, component of the Mediator complex, a coactivator involved in the regulated transcription of nearly all RNA polymerase II-dependent genes. Mediator functions as a bridge to convey information from gene-specific regulatory proteins to the basal RNA polymerase II transcription machinery. Mediator is recruited to promoters by direct interactions with regulatory proteins and serves as a scaffold for the assembly of a functional preinitiation complex with RNA polymerase II and the general transcription factors. Required for female somatic sexual development. The sequence is that of Mediator of RNA polymerase II transcription subunit 29 (ix) from Drosophila melanogaster (Fruit fly).